The primary structure comprises 367 residues: Chorismate synthase (367 aa).

Arg48 is a binding site for NADP(+). FMN contacts are provided by residues 125–127 (RSS), 243–244 (NA), Gly283, 298–302 (KPTSS), and Arg324.

The protein belongs to the chorismate synthase family. In terms of assembly, homotetramer. The cofactor is FMNH2.

It catalyses the reaction 5-O-(1-carboxyvinyl)-3-phosphoshikimate = chorismate + phosphate. Its pathway is metabolic intermediate biosynthesis; chorismate biosynthesis; chorismate from D-erythrose 4-phosphate and phosphoenolpyruvate: step 7/7. In terms of biological role, catalyzes the anti-1,4-elimination of the C-3 phosphate and the C-6 proR hydrogen from 5-enolpyruvylshikimate-3-phosphate (EPSP) to yield chorismate, which is the branch point compound that serves as the starting substrate for the three terminal pathways of aromatic amino acid biosynthesis. This reaction introduces a second double bond into the aromatic ring system. This is Chorismate synthase from Psychrobacter sp. (strain PRwf-1).